The following is a 366-amino-acid chain: Anhydro-N-acetylmuramic acid kinase (366 aa).

Residue 12–19 (GTSMDGAD) coordinates ATP.

This sequence belongs to the anhydro-N-acetylmuramic acid kinase family.

It catalyses the reaction 1,6-anhydro-N-acetyl-beta-muramate + ATP + H2O = N-acetyl-D-muramate 6-phosphate + ADP + H(+). The protein operates within amino-sugar metabolism; 1,6-anhydro-N-acetylmuramate degradation. It functions in the pathway cell wall biogenesis; peptidoglycan recycling. Catalyzes the specific phosphorylation of 1,6-anhydro-N-acetylmuramic acid (anhMurNAc) with the simultaneous cleavage of the 1,6-anhydro ring, generating MurNAc-6-P. Is required for the utilization of anhMurNAc either imported from the medium or derived from its own cell wall murein, and thus plays a role in cell wall recycling. The chain is Anhydro-N-acetylmuramic acid kinase from Neisseria meningitidis serogroup C (strain 053442).